A 671-amino-acid polypeptide reads, in one-letter code: Leucine aminopeptidase 2 (671 aa).

Residues 184–186 and 311–316 contribute to the substrate site; these read QLE and PYGGME. Histidine 340 contacts Zn(2+). Residue glutamate 341 is the Proton acceptor of the active site. Positions 344 and 363 each coordinate Zn(2+). Tyrosine 429 functions as the Proton donor in the catalytic mechanism.

It belongs to the peptidase M1 family. Zn(2+) serves as cofactor.

It is found in the cytoplasm. The protein resides in the nucleus. The catalysed reaction is an epoxide + H2O = an ethanediol. Its activity is regulated as follows. Inhibited by 3-(4-benzyloxyphenyl)-2-(R)-amino-1-propanethiol (thioamine) and N-hydroxy-N-(2-(S)-amino-3-(4-benzyloxyphenyl)propyl)-5-carboxypen-tanamide (hydroxamic acid). The aminopeptidase activity is stimulated by LTA(4). Its function is as follows. Aminopeptidase that preferentially cleaves di- and tripeptides. Also has low epoxide hydrolase activity (in vitro). Can hydrolyze the epoxide leukotriene LTA(4) but it forms preferentially 5,6-dihydroxy-7,9,11,14-eicosatetraenoic acid rather than the cytokine leukotriene B(4) as the product compared to the homologous mammalian enzyme (in vitro). The protein is Leucine aminopeptidase 2 of Saccharomyces cerevisiae (strain YJM789) (Baker's yeast).